Reading from the N-terminus, the 309-residue chain is tRNA dimethylallyltransferase (309 aa).

13 to 20 (GPTGAGKT) provides a ligand contact to ATP. Residue 15-20 (TGAGKT) coordinates substrate. 2 interaction with substrate tRNA regions span residues 38 to 41 (DSRQ) and 162 to 166 (QRVTR).

It belongs to the IPP transferase family. As to quaternary structure, monomer. Requires Mg(2+) as cofactor.

The catalysed reaction is adenosine(37) in tRNA + dimethylallyl diphosphate = N(6)-dimethylallyladenosine(37) in tRNA + diphosphate. In terms of biological role, catalyzes the transfer of a dimethylallyl group onto the adenine at position 37 in tRNAs that read codons beginning with uridine, leading to the formation of N6-(dimethylallyl)adenosine (i(6)A). This chain is tRNA dimethylallyltransferase, found in Nitratidesulfovibrio vulgaris (strain ATCC 29579 / DSM 644 / CCUG 34227 / NCIMB 8303 / VKM B-1760 / Hildenborough) (Desulfovibrio vulgaris).